The sequence spans 549 residues: Glucose-6-phosphate isomerase (549 aa).

Glutamate 355 acts as the Proton donor in catalysis. Catalysis depends on residues histidine 386 and lysine 514.

It belongs to the GPI family.

The protein localises to the cytoplasm. The enzyme catalyses alpha-D-glucose 6-phosphate = beta-D-fructose 6-phosphate. The protein operates within carbohydrate biosynthesis; gluconeogenesis. It functions in the pathway carbohydrate degradation; glycolysis; D-glyceraldehyde 3-phosphate and glycerone phosphate from D-glucose: step 2/4. Its function is as follows. Catalyzes the reversible isomerization of glucose-6-phosphate to fructose-6-phosphate. This is Glucose-6-phosphate isomerase from Edwardsiella ictaluri (strain 93-146).